Reading from the N-terminus, the 33-residue chain is Alpha-amanitin proprotein (33 aa).

A propeptide spanning residues 1-10 (MSDINATRLP) is cleaved from the precursor. Position 11 is a (3R,4R)-4,5-dihydroxyisoleucine; in form alpha-amanitin (Ile-11). The residue at position 11 (Ile-11) is a (3R,4S)-4-hydroxyisoleucine; in form gamma-amanitin. Positions 11–18 (IWGIGCNP) form a cross-link, cyclopeptide (Ile-Pro). The segment at residues 12–16 (WGIGC) is a cross-link (2'-cysteinyl-6'-hydroxytryptophan sulfoxide (Trp-Cys)). Residue Pro-18 is modified to 4-hydroxyproline. Positions 19 to 33 (CVGDEVTALITRGEA) are excised as a propeptide.

The protein belongs to the MSDIN fungal toxin family. Processed by the macrocyclase-peptidase enzyme POPB to yield a toxic cyclic decapeptide. POPB first removes 10 residues from the N-terminus. Conformational trapping of the remaining peptide forces the enzyme to release this intermediate rather than proceed to macrocyclization. The enzyme rebinds the remaining peptide in a different conformation and catalyzes macrocyclization of the N-terminal 8 residues.

Its function is as follows. Major toxin belonging to the bicyclic octapeptides amatoxins that acts by binding non-competitively to RNA polymerase II and greatly slowing the elongation of transcripts from target promoters. This is Alpha-amanitin proprotein from Amanita pallidorosea.